Reading from the N-terminus, the 127-residue chain is Glycine cleavage system H protein (127 aa).

In terms of domain architecture, Lipoyl-binding spans 24–105; sequence TALVGITDFA…YNDGWLVKMK (82 aa). Lysine 65 is modified (N6-lipoyllysine).

It belongs to the GcvH family. In terms of assembly, the glycine cleavage system is composed of four proteins: P, T, L and H. (R)-lipoate serves as cofactor.

The glycine cleavage system catalyzes the degradation of glycine. The H protein shuttles the methylamine group of glycine from the P protein to the T protein. The sequence is that of Glycine cleavage system H protein from Pelodictyon phaeoclathratiforme (strain DSM 5477 / BU-1).